A 255-amino-acid chain; its full sequence is MKIDLNSDMGEGFGPYRLCDDEAMMKIVSSANIACGFHGGDPDTMARMVRLAKANGVGIGAHPGLPDRAGFGRREIPFQPDELRQQMLYQLGALMAIAGAEGMKVGHFSFHAAMGNMVNRDPVLADLMMNAIATVDPRLVVFVTPESEIERAAKRAGLKTLALFLADRAYDAEGRLVARGLPGALVKDETSVRARVRRFLTHGQVEAIDGTIIAMPAHSILVHSDTPGSLELARIIRSEIEASGATLAPAAEHAA.

It belongs to the LamB/PxpA family. As to quaternary structure, forms a complex composed of PxpA, PxpB and PxpC.

The catalysed reaction is 5-oxo-L-proline + ATP + 2 H2O = L-glutamate + ADP + phosphate + H(+). Catalyzes the cleavage of 5-oxoproline to form L-glutamate coupled to the hydrolysis of ATP to ADP and inorganic phosphate. This Agrobacterium fabrum (strain C58 / ATCC 33970) (Agrobacterium tumefaciens (strain C58)) protein is 5-oxoprolinase subunit A 2.